Here is an 88-residue protein sequence, read N- to C-terminus: Small ribosomal subunit protein bS20 (88 aa).

Belongs to the bacterial ribosomal protein bS20 family.

Its function is as follows. Binds directly to 16S ribosomal RNA. This chain is Small ribosomal subunit protein bS20, found in Bartonella henselae (strain ATCC 49882 / DSM 28221 / CCUG 30454 / Houston 1) (Rochalimaea henselae).